Here is a 78-residue protein sequence, read N- to C-terminus: Large ribosomal subunit protein bL28 (78 aa).

Residues 1-26 form a disordered region; that stretch reads MARVCQVTGKRPMSGHNVSHANNKTK.

Belongs to the bacterial ribosomal protein bL28 family.

The protein is Large ribosomal subunit protein bL28 of Nitrosomonas europaea (strain ATCC 19718 / CIP 103999 / KCTC 2705 / NBRC 14298).